Reading from the N-terminus, the 826-residue chain is (2S)-3-sulfopropanediol dehydratase (826 aa).

The PFL domain occupies 33 to 695 (PRVNRLRQAF…NTNASIDGRK (663 aa)). C464 functions as the Cysteine radical intermediate in the catalytic mechanism. E466 serves as the catalytic Proton acceptor. One can recognise a Glycine radical domain in the interval 706 to 826 (PVHTDGGSHD…DLIQRTELHF (121 aa)). A Glycine radical modification is found at G802.

This sequence belongs to the glycyl radical enzyme (GRE) family. In terms of processing, requires the activating protein HpfH to generate the key active site glycyl radical on Gly-802 that is involved in catalysis.

The enzyme catalyses (2S)-3-sulfopropanediol = 3-oxopropane-1-sulfonate + H2O. It functions in the pathway organosulfur degradation; alkanesulfonate degradation. Functionally, involved in the degradation of the organosulfur compound 2(S)-dihydroxypropanesulfonate (DHPS). Catalyzes the radical-mediated dehydration of DHPS to produce 3-sulfopropionaldehyde (3-oxopropane-1-sulfonate). The chain is (2S)-3-sulfopropanediol dehydratase from Klebsiella oxytoca.